Consider the following 615-residue polypeptide: 1-deoxy-D-xylulose-5-phosphate synthase (615 aa).

Thiamine diphosphate is bound by residues His72 and 111–113 (GHS). Asp142 contacts Mg(2+). Thiamine diphosphate contacts are provided by residues 143-144 (GA), Asn171, Tyr278, and Glu360. Asn171 lines the Mg(2+) pocket.

This sequence belongs to the transketolase family. DXPS subfamily. Homodimer. Mg(2+) is required as a cofactor. Requires thiamine diphosphate as cofactor.

The enzyme catalyses D-glyceraldehyde 3-phosphate + pyruvate + H(+) = 1-deoxy-D-xylulose 5-phosphate + CO2. It functions in the pathway metabolic intermediate biosynthesis; 1-deoxy-D-xylulose 5-phosphate biosynthesis; 1-deoxy-D-xylulose 5-phosphate from D-glyceraldehyde 3-phosphate and pyruvate: step 1/1. Its function is as follows. Catalyzes the acyloin condensation reaction between C atoms 2 and 3 of pyruvate and glyceraldehyde 3-phosphate to yield 1-deoxy-D-xylulose-5-phosphate (DXP). This chain is 1-deoxy-D-xylulose-5-phosphate synthase, found in Campylobacter jejuni subsp. doylei (strain ATCC BAA-1458 / RM4099 / 269.97).